The sequence spans 103 residues: Large ribosomal subunit protein bL21 (103 aa).

The protein belongs to the bacterial ribosomal protein bL21 family. Part of the 50S ribosomal subunit. Contacts protein L20.

This protein binds to 23S rRNA in the presence of protein L20. The protein is Large ribosomal subunit protein bL21 of Marinobacter nauticus (strain ATCC 700491 / DSM 11845 / VT8) (Marinobacter aquaeolei).